Reading from the N-terminus, the 114-residue chain is Large ribosomal subunit protein bL21 (114 aa).

Belongs to the bacterial ribosomal protein bL21 family. Part of the 50S ribosomal subunit. Contacts protein L20.

Its function is as follows. This protein binds to 23S rRNA in the presence of protein L20. The chain is Large ribosomal subunit protein bL21 from Protochlamydia amoebophila (strain UWE25).